A 59-amino-acid polypeptide reads, in one-letter code: Cortexin domain containing 2 (59 aa).

A helical transmembrane segment spans residues 20-40 (FAIAFVVLVFVFLIVMVFRCV).

It localises to the membrane. This is Cortexin domain containing 2 from Mus musculus (Mouse).